A 423-amino-acid polypeptide reads, in one-letter code: uncharacterized protein (423 aa).

The region spanning 75-145 (LHVVVTQPIA…PIVNNIKVAG (71 aa)) is the BON domain.

The protein belongs to the bacterial secretin family.

Involved in the secretion of an unknown compound. This is an uncharacterized protein from Sinorhizobium fredii (strain NBRC 101917 / NGR234).